The primary structure comprises 318 residues: NAD(P)H-dependent D-xylose reductase (318 aa).

Catalysis depends on Y48, which acts as the Proton donor. H110 contacts substrate. NAD(+) is bound by residues S165–N166, S214–E223, and K270–N280.

Belongs to the aldo/keto reductase family.

The enzyme catalyses xylitol + NAD(+) = D-xylose + NADH + H(+). It carries out the reaction xylitol + NADP(+) = D-xylose + NADPH + H(+). It functions in the pathway carbohydrate metabolism; D-xylose degradation. Functionally, reduces D-xylose into xylitol. Has a preference for NADPH, but can also utilize NADH as cosubstrate. The chain is NAD(P)H-dependent D-xylose reductase (XYL1) from Pachysolen tannophilus (Yeast).